The chain runs to 240 residues: Aliphatic sulfonates import ATP-binding protein SsuB 2 (240 aa).

The region spanning V2–A218 is the ABC transporter domain. G34–S41 contacts ATP.

This sequence belongs to the ABC transporter superfamily. Aliphatic sulfonates importer (TC 3.A.1.17.2) family. In terms of assembly, the complex is composed of two ATP-binding proteins (SsuB), two transmembrane proteins (SsuC) and a solute-binding protein (SsuA).

It is found in the cell membrane. The enzyme catalyses ATP + H2O + aliphatic sulfonate-[sulfonate-binding protein]Side 1 = ADP + phosphate + aliphatic sulfonateSide 2 + [sulfonate-binding protein]Side 1.. In terms of biological role, part of the ABC transporter complex SsuABC involved in aliphatic sulfonates import. Responsible for energy coupling to the transport system. The polypeptide is Aliphatic sulfonates import ATP-binding protein SsuB 2 (Nocardia farcinica (strain IFM 10152)).